A 565-amino-acid chain; its full sequence is Adenine deaminase (565 aa).

The protein belongs to the metallo-dependent hydrolases superfamily. Adenine deaminase family. Mn(2+) serves as cofactor.

It carries out the reaction adenine + H2O + H(+) = hypoxanthine + NH4(+). The protein is Adenine deaminase of Cereibacter sphaeroides (strain KD131 / KCTC 12085) (Rhodobacter sphaeroides).